Reading from the N-terminus, the 214-residue chain is Rac-like GTP-binding protein 1 (214 aa).

Residues 17-24, 20-25, T42, 64-68, G67, 122-125, 123-125, and 164-165 contribute to the GTP site; these read GDGAVGKT, AVGKTC, DTAGQ, TKLD, KLD, and SK. The Effector region motif lies at 39 to 47; the sequence is YIPTVFDNF.

Belongs to the small GTPase superfamily. Rho family. In terms of assembly, may interact with MPK1/MAPK6. Binds to RBOHB, preferentially in the GTP-bound form. Interacts with CCR1 in a GTP-dependent manner. May be palmitoylated.

The protein resides in the cytoplasm. The protein localises to the membrane. Functionally, small GTPase playing a general role in disease resistance signaling pathway. Acts downstream of heterotrimeric G protein alpha subunit. Regulates cell death and reactive oxygen species production, probably through NADPH oxidase. Also involved in sphingolipid elicitor (SE)-dependent defense signaling. Activates phytoalexin production and alters defense-related genes. Down-regulates metallothionein 2b, a reactive oxygen scavenger. May control lignin synthesis through regulation of both NADPH oxidase and CCR1 activities during defense responses. Stimulates lignin synthesis in suspension cell culture. The sequence is that of Rac-like GTP-binding protein 1 (RAC1) from Oryza sativa subsp. japonica (Rice).